A 162-amino-acid polypeptide reads, in one-letter code: MSIKFFLLVSRQGKVRLAKWFNTLSIKERAKIIRDVSSLVITRKPKMCNFVEYKGEKIVYRRYASLFFVCGIEQDDNELIILEVIHKFVECLDKYFGNVCELDLIFNFEKAYYVMEELLLAGELQESSKTNVLSAVLAGDAESEADAQQDSLQKLVGSVKKR.

It belongs to the adaptor complexes small subunit family. Adaptor protein complex 1 (AP-1) is a heterotetramer composed of two large adaptins (gamma-type subunit apl4 and beta-type subunit apl2), a medium adaptin (mu-type subunit apm1) and a small adaptin (sigma-type subunit aps1). AP-1 interacts with clathrin.

It is found in the cytoplasm. The protein resides in the nucleus. It localises to the cytoplasmic vesicle. The protein localises to the clathrin-coated vesicle membrane. Its subcellular location is the endosome. It is found in the golgi apparatus. In terms of biological role, component of the AP-1 complex which links clathrin to receptors in coated vesicles. Clathrin-associated protein complexes are believed to interact with the cytoplasmic tails of membrane proteins, leading to their selection and concentration. The polypeptide is AP-1 complex subunit sigma-1 (vas2) (Schizosaccharomyces pombe (strain 972 / ATCC 24843) (Fission yeast)).